Consider the following 162-residue polypeptide: Probable chemoreceptor glutamine deamidase CheD (162 aa).

This sequence belongs to the CheD family.

The catalysed reaction is L-glutaminyl-[protein] + H2O = L-glutamyl-[protein] + NH4(+). Probably deamidates glutamine residues to glutamate on methyl-accepting chemotaxis receptors (MCPs), playing an important role in chemotaxis. The polypeptide is Probable chemoreceptor glutamine deamidase CheD (Clostridium botulinum (strain Alaska E43 / Type E3)).